The following is a 65-amino-acid chain: MPKMKTRRGAAKRFAKTGSGKFKRRKQGLRHILTKKTAKRKSRLGQSATVDSANIGQVKRMLPYA.

Residues 1–43 (MPKMKTRRGAAKRFAKTGSGKFKRRKQGLRHILTKKTAKRKSR) show a composition bias toward basic residues. Residues 1 to 49 (MPKMKTRRGAAKRFAKTGSGKFKRRKQGLRHILTKKTAKRKSRLGQSAT) form a disordered region.

Belongs to the bacterial ribosomal protein bL35 family.

The protein is Large ribosomal subunit protein bL35 of Maridesulfovibrio salexigens (strain ATCC 14822 / DSM 2638 / NCIMB 8403 / VKM B-1763) (Desulfovibrio salexigens).